The sequence spans 326 residues: Ketol-acid reductoisomerase (NADP(+)) (326 aa).

The KARI N-terminal Rossmann domain occupies 2–182 (AKIYGDEDAS…GFTRAGVIKT (181 aa)). NADP(+) contacts are provided by residues 25–28 (YGSQ), R48, S53, and 83–86 (DEVQ). Residue H108 is part of the active site. Residue G134 coordinates NADP(+). The 143-residue stretch at 183–325 (TFREEVETDL…ERLRKMMGFE (143 aa)) folds into the KARI C-terminal knotted domain. D191, E195, E227, and E231 together coordinate Mg(2+). Position 252 (S252) interacts with substrate.

It belongs to the ketol-acid reductoisomerase family. Mg(2+) serves as cofactor.

It carries out the reaction (2R)-2,3-dihydroxy-3-methylbutanoate + NADP(+) = (2S)-2-acetolactate + NADPH + H(+). The enzyme catalyses (2R,3R)-2,3-dihydroxy-3-methylpentanoate + NADP(+) = (S)-2-ethyl-2-hydroxy-3-oxobutanoate + NADPH + H(+). It participates in amino-acid biosynthesis; L-isoleucine biosynthesis; L-isoleucine from 2-oxobutanoate: step 2/4. Its pathway is amino-acid biosynthesis; L-valine biosynthesis; L-valine from pyruvate: step 2/4. In terms of biological role, involved in the biosynthesis of branched-chain amino acids (BCAA). Catalyzes an alkyl-migration followed by a ketol-acid reduction of (S)-2-acetolactate (S2AL) to yield (R)-2,3-dihydroxy-isovalerate. In the isomerase reaction, S2AL is rearranged via a Mg-dependent methyl migration to produce 3-hydroxy-3-methyl-2-ketobutyrate (HMKB). In the reductase reaction, this 2-ketoacid undergoes a metal-dependent reduction by NADPH to yield (R)-2,3-dihydroxy-isovalerate. This chain is Ketol-acid reductoisomerase (NADP(+)), found in Methanopyrus kandleri (strain AV19 / DSM 6324 / JCM 9639 / NBRC 100938).